The following is a 45-amino-acid chain: Myotoxin-2 (45 aa).

3 disulfides stabilise this stretch: C4/C36, C11/C30, and C18/C37.

Belongs to the crotamine-myotoxin family. As to quaternary structure, monomer. Expressed by the venom gland.

It is found in the secreted. Cationic peptide that possesses multiple functions. It acts as a cell-penetrating peptide (CPP), and as a potent voltage-gated potassium channel (Kv) inhibitor. It exhibits antimicrobial activities, hind limb paralysis, and severe muscle necrosis by a non-enzymatic mechanism. The protein is Myotoxin-2 of Crotalus viridis viridis (Prairie rattlesnake).